The following is a 166-amino-acid chain: Cyclin-dependent kinase 4 inhibitor D (166 aa).

M1 carries the N-acetylmethionine modification. ANK repeat units lie at residues 41–69 (FGKT…SPNV), 73–102 (SGTT…DVNA), 106–135 (TGAL…LHHR), and 138–166 (TGLT…VAPL).

The protein belongs to the CDKN2 cyclin-dependent kinase inhibitor family. Interacts with CDK6.

It is found in the nucleus. It localises to the cytoplasm. Interacts strongly with CDK4 and CDK6 and inhibits them. This is Cyclin-dependent kinase 4 inhibitor D (CDKN2D) from Bos taurus (Bovine).